We begin with the raw amino-acid sequence, 341 residues long: THO complex subunit 6 (341 aa).

7 WD repeats span residues 22 to 61 (RLHM…SSEA), 74 to 112 (AHDG…GCKE), 124 to 165 (LEVP…RVLR), 166 to 205 (GHTD…EVQT), 215 to 254 (SRPH…PTTI), 256 to 293 (PIRA…KAQV), and 295 to 339 (GSSP…AFSL). The residue at position 180 (Ser180) is a Phosphoserine.

This sequence belongs to the WD repeat THOC6 family. Component of the THO subcomplex, which is composed of THOC1, THOC2, THOC3, THOC5, THOC6 and THOC7. The THO subcomplex interacts with DDX39B to form the THO-DDX39B complex which multimerizes into a 28-subunit tetrameric assembly. Component of the transcription/export (TREX) complex at least composed of ALYREF/THOC4, DDX39B, SARNP/CIP29, CHTOP and the THO subcomplex; in the complex interacts with THOC5; together with THOC5 and THOC7, plays a key structural role in the oligomerization of the THO-DDX39B complex. TREX seems to have a dynamic structure involving ATP-dependent remodeling.

It is found in the nucleus. The protein resides in the nucleus speckle. In terms of biological role, component of the THO subcomplex of the TREX complex which is thought to couple mRNA transcription, processing and nuclear export, and which specifically associates with spliced mRNA and not with unspliced pre-mRNA. Plays a key structural role in the oligomerization of the THO-DDX39B complex. TREX is recruited to spliced mRNAs by a transcription-independent mechanism, binds to mRNA upstream of the exon-junction complex (EJC) and is recruited in a splicing- and cap-dependent manner to a region near the 5' end of the mRNA where it functions in mRNA export to the cytoplasm via the TAP/NXF1 pathway. Plays a role in apoptosis negative control involved in brain development. Its function is as follows. (Microbial infection) The TREX complex is essential for the export of Kaposi's sarcoma-associated herpesvirus (KSHV) intronless mRNAs and infectious virus production. In Homo sapiens (Human), this protein is THO complex subunit 6 (THOC6).